We begin with the raw amino-acid sequence, 409 residues long: Arginine deiminase (409 aa).

The active-site Amidino-cysteine intermediate is the cysteine 399.

Belongs to the arginine deiminase family.

It localises to the cytoplasm. It carries out the reaction L-arginine + H2O = L-citrulline + NH4(+). The protein operates within amino-acid degradation; L-arginine degradation via ADI pathway; carbamoyl phosphate from L-arginine: step 1/2. The sequence is that of Arginine deiminase from Streptococcus pneumoniae (strain P1031).